Consider the following 556-residue polypeptide: Dihydroxy-acid dehydratase (556 aa).

Cysteine 47 contributes to the [2Fe-2S] cluster binding site. Aspartate 79 is a Mg(2+) binding site. Cysteine 120 lines the [2Fe-2S] cluster pocket. Residues aspartate 121 and lysine 122 each coordinate Mg(2+). Lysine 122 bears the N6-carboxylysine mark. Residue cysteine 192 participates in [2Fe-2S] cluster binding. Glutamate 444 contributes to the Mg(2+) binding site. Serine 470 acts as the Proton acceptor in catalysis.

This sequence belongs to the IlvD/Edd family. Homodimer. Requires [2Fe-2S] cluster as cofactor. Mg(2+) is required as a cofactor.

The catalysed reaction is (2R)-2,3-dihydroxy-3-methylbutanoate = 3-methyl-2-oxobutanoate + H2O. It catalyses the reaction (2R,3R)-2,3-dihydroxy-3-methylpentanoate = (S)-3-methyl-2-oxopentanoate + H2O. The protein operates within amino-acid biosynthesis; L-isoleucine biosynthesis; L-isoleucine from 2-oxobutanoate: step 3/4. Its pathway is amino-acid biosynthesis; L-valine biosynthesis; L-valine from pyruvate: step 3/4. In terms of biological role, functions in the biosynthesis of branched-chain amino acids. Catalyzes the dehydration of (2R,3R)-2,3-dihydroxy-3-methylpentanoate (2,3-dihydroxy-3-methylvalerate) into 2-oxo-3-methylpentanoate (2-oxo-3-methylvalerate) and of (2R)-2,3-dihydroxy-3-methylbutanoate (2,3-dihydroxyisovalerate) into 2-oxo-3-methylbutanoate (2-oxoisovalerate), the penultimate precursor to L-isoleucine and L-valine, respectively. This chain is Dihydroxy-acid dehydratase, found in Prochlorococcus marinus (strain MIT 9211).